A 328-amino-acid chain; its full sequence is Phosphate acetyltransferase (328 aa).

This sequence belongs to the phosphate acetyltransferase and butyryltransferase family.

The protein resides in the cytoplasm. The enzyme catalyses acetyl-CoA + phosphate = acetyl phosphate + CoA. Its pathway is metabolic intermediate biosynthesis; acetyl-CoA biosynthesis; acetyl-CoA from acetate: step 2/2. The sequence is that of Phosphate acetyltransferase (pta) from Staphylococcus aureus (strain MRSA252).